We begin with the raw amino-acid sequence, 48 residues long: Cuticle protein 6 isoform b (48 aa).

This chain is Cuticle protein 6 isoform b, found in Limulus polyphemus (Atlantic horseshoe crab).